We begin with the raw amino-acid sequence, 271 residues long: Ribosomal RNA small subunit methyltransferase A (271 aa).

The S-adenosyl-L-methionine site is built by asparagine 19, leucine 21, glycine 46, glutamate 67, aspartate 92, and asparagine 113.

It belongs to the class I-like SAM-binding methyltransferase superfamily. rRNA adenine N(6)-methyltransferase family. RsmA subfamily.

It localises to the cytoplasm. It carries out the reaction adenosine(1518)/adenosine(1519) in 16S rRNA + 4 S-adenosyl-L-methionine = N(6)-dimethyladenosine(1518)/N(6)-dimethyladenosine(1519) in 16S rRNA + 4 S-adenosyl-L-homocysteine + 4 H(+). Specifically dimethylates two adjacent adenosines (A1518 and A1519) in the loop of a conserved hairpin near the 3'-end of 16S rRNA in the 30S particle. May play a critical role in biogenesis of 30S subunits. The sequence is that of Ribosomal RNA small subunit methyltransferase A from Photobacterium profundum (strain SS9).